We begin with the raw amino-acid sequence, 290 residues long: MREIVHLQAGQCGNQIGAKFWEVISDEHGIDPTGTYHGDSDLQLERINVYYNEATGGKYVPRAVLVDLEPGTMDSVRSGPFGQIFRPDNFVFGQSGAGNNWAKGHYTEGAELVDSVLDVVRKEAESCDCLQGFQLTHSLGGGTGSGMGTLLISKIREEYPDRLTTPTYGDLNHLVSATMSGVTTCLRFPGQLNADLRKLAVNMVPFPRLHFFMPGFAPLTSRALTVPELTQQMFDAKHGRYLTVAAVFRTAVCDIPPRGLKMSATFIGNSTAIQELFKRISEQFTAMFRR.

Residues 1-4 carry the MREI motif motif; sequence MREI. Residue Gln-11 participates in GTP binding. Thr-55 is subject to Phosphothreonine. Position 58 is an N6-acetyllysine (Lys-58). GTP contacts are provided by Glu-69, Ser-138, Gly-142, Thr-143, Gly-144, and Asn-172. Residue Glu-69 coordinates Mg(2+).

It belongs to the tubulin family. As to quaternary structure, dimer of alpha and beta chains. A typical microtubule is a hollow water-filled tube with an outer diameter of 25 nm and an inner diameter of 15 nM. Alpha-beta heterodimers associate head-to-tail to form protofilaments running lengthwise along the microtubule wall with the beta-tubulin subunit facing the microtubule plus end conferring a structural polarity. Microtubules usually have 13 protofilaments but different protofilament numbers can be found in some organisms and specialized cells. Component of sperm flagellar doublet microtubules. Requires Mg(2+) as cofactor. Some glutamate residues at the C-terminus are polyglycylated, resulting in polyglycine chains on the gamma-carboxyl group. Glycylation is mainly limited to tubulin incorporated into axonemes (cilia and flagella) whereas glutamylation is prevalent in neuronal cells, centrioles, axonemes, and the mitotic spindle. Both modifications can coexist on the same protein on adjacent residues, and lowering polyglycylation levels increases polyglutamylation, and reciprocally. Cilia and flagella glycylation is required for their stability and maintenance. Flagella glycylation controls sperm motility. In terms of processing, some glutamate residues at the C-terminus are polyglutamylated, resulting in polyglutamate chains on the gamma-carboxyl group. Polyglutamylation plays a key role in microtubule severing by spastin (SPAST). SPAST preferentially recognizes and acts on microtubules decorated with short polyglutamate tails: severing activity by SPAST increases as the number of glutamates per tubulin rises from one to eight, but decreases beyond this glutamylation threshold. Glutamylation is also involved in cilia motility.

It is found in the cytoplasm. The protein resides in the cytoskeleton. Its subcellular location is the flagellum axoneme. Tubulin is the major constituent of microtubules, a cylinder consisting of laterally associated linear protofilaments composed of alpha- and beta-tubulin heterodimers. Microtubules grow by the addition of GTP-tubulin dimers to the microtubule end, where a stabilizing cap forms. Below the cap, tubulin dimers are in GDP-bound state, owing to GTPase activity of alpha-tubulin. This is Tubulin beta-4B chain (TUBB4B) from Mesocricetus auratus (Golden hamster).